We begin with the raw amino-acid sequence, 237 residues long: Purine nucleoside phosphorylase DeoD-type (237 aa).

An a purine D-ribonucleoside-binding site is contributed by histidine 5. Residues glycine 21, arginine 25, arginine 44, and 88 to 91 (RVGS) each bind phosphate. A purine D-ribonucleoside-binding positions include 180 to 182 (EME) and 204 to 205 (SD). Aspartate 205 serves as the catalytic Proton donor.

This sequence belongs to the PNP/UDP phosphorylase family. In terms of assembly, homohexamer; trimer of homodimers.

It catalyses the reaction a purine D-ribonucleoside + phosphate = a purine nucleobase + alpha-D-ribose 1-phosphate. The catalysed reaction is a purine 2'-deoxy-D-ribonucleoside + phosphate = a purine nucleobase + 2-deoxy-alpha-D-ribose 1-phosphate. Functionally, catalyzes the reversible phosphorolytic breakdown of the N-glycosidic bond in the beta-(deoxy)ribonucleoside molecules, with the formation of the corresponding free purine bases and pentose-1-phosphate. The chain is Purine nucleoside phosphorylase DeoD-type from Edwardsiella ictaluri (strain 93-146).